The following is a 120-amino-acid chain: Putative defensin-like protein 179 (120 aa).

An N-terminal signal peptide occupies residues 1–27; that stretch reads MERTSTSLLFLLSLLIIFASAVNQIRA. Disulfide bonds link cysteine 37-cysteine 56, cysteine 40-cysteine 63, cysteine 44-cysteine 65, cysteine 74-cysteine 120, cysteine 85-cysteine 105, cysteine 90-cysteine 114, and cysteine 94-cysteine 116.

The protein belongs to the DEFL family.

It is found in the secreted. In Arabidopsis thaliana (Mouse-ear cress), this protein is Putative defensin-like protein 179 (LCR57).